The following is a 225-amino-acid chain: Two-component response regulator ARR8 (225 aa).

The Response regulatory domain occupies 10 to 145; it reads HVLAVDDSLF…DLTKLKPHMM (136 aa). D78 carries the 4-aspartylphosphate modification.

Belongs to the ARR family. Type-A subfamily. Two-component system major event consists of a His-to-Asp phosphorelay between a sensor histidine kinase (HK) and a response regulator (RR). In plants, the His-to-Asp phosphorelay involves an additional intermediate named Histidine-containing phosphotransfer protein (HPt). This multistep phosphorelay consists of a His-Asp-His-Asp sequential transfer of a phosphate group between first a His and an Asp of the HK protein, followed by the transfer to a conserved His of the HPt protein and finally the transfer to an Asp in the receiver domain of the RR protein. In terms of tissue distribution, predominantly expressed in roots.

Its subcellular location is the nucleus. In terms of biological role, functions as a response regulator involved in His-to-Asp phosphorelay signal transduction system. Phosphorylation of the Asp residue in the receiver domain activates the ability of the protein to promote the transcription of target genes. Type-A response regulators seem to act as negative regulators of the cytokinin signaling. This Arabidopsis thaliana (Mouse-ear cress) protein is Two-component response regulator ARR8 (ARR8).